A 188-amino-acid chain; its full sequence is UPF0461 protein C5orf24 homolog (188 aa).

The residue at position 37 (S37) is a Phosphoserine. Residue K75 forms a Glycyl lysine isopeptide (Lys-Gly) (interchain with G-Cter in SUMO2) linkage. Positions 79–142 (KKKKNLNRSG…GYKVSPGRPP (64 aa)) are disordered. A compositionally biased stretch (basic residues) spans 80–92 (KKKNLNRSGKRGR). Over residues 94-107 (SGTTKSAGYRTSTG) the composition is skewed to polar residues. 2 positions are modified to phosphoserine: S121 and S180. A Glycyl lysine isopeptide (Lys-Gly) (interchain with G-Cter in SUMO2) cross-link involves residue K184.

It belongs to the UPF0461 family.

The sequence is that of UPF0461 protein C5orf24 homolog from Bos taurus (Bovine).